The following is a 255-amino-acid chain: 5'-nucleotidase SurE (255 aa).

A divalent metal cation-binding residues include Asp-8, Asp-9, Ser-39, and Asn-95.

This sequence belongs to the SurE nucleotidase family. A divalent metal cation serves as cofactor.

The protein resides in the cytoplasm. The enzyme catalyses a ribonucleoside 5'-phosphate + H2O = a ribonucleoside + phosphate. Nucleotidase that shows phosphatase activity on nucleoside 5'-monophosphates. This Rubrivivax gelatinosus (strain NBRC 100245 / IL144) protein is 5'-nucleotidase SurE.